The primary structure comprises 307 residues: NAD kinase (307 aa).

Catalysis depends on D80, which acts as the Proton acceptor. NAD(+)-binding positions include 80–81 (DG), H85, 154–155 (ND), H165, H182, D184, 195–200 (TAYALS), and Q254.

It belongs to the NAD kinase family. Requires a divalent metal cation as cofactor.

The protein localises to the cytoplasm. The enzyme catalyses NAD(+) + ATP = ADP + NADP(+) + H(+). Its function is as follows. Involved in the regulation of the intracellular balance of NAD and NADP, and is a key enzyme in the biosynthesis of NADP. Catalyzes specifically the phosphorylation on 2'-hydroxyl of the adenosine moiety of NAD to yield NADP. This Acinetobacter baylyi (strain ATCC 33305 / BD413 / ADP1) protein is NAD kinase.